We begin with the raw amino-acid sequence, 416 residues long: E3 ubiquitin-protein ligase RNFT1 (416 aa).

2 disordered regions span residues 1-50 (MKHR…MSLP) and 68-117 (DLSS…DSRE). Basic and acidic residues predominate over residues 7-19 (HERQSSTESKNLK). Composition is skewed to polar residues over residues 20-45 (ETTQ…SPSA) and 68-80 (DLSS…VARS). Over residues 81-100 (NSRRVRPSTHGRSPSRHGHT) the composition is skewed to basic residues. The next 6 helical transmembrane spans lie at 146 to 166 (LVVQ…TFLY), 184 to 204 (LQCL…YYTF), 214 to 234 (VFMN…VVGI), 237 to 257 (FIGK…PSFV), 265 to 287 (YWYM…PVWF), and 302 to 322 (WHFG…IIFG). Residues 349-400 (CSEADGMCAICQAEFTKPIALICQHVFCEECISSWFNKEKTCPLCRTLISNH) form a required for ubiquitin ligase activity and for protection against ER stress-induced cell death region. The RING-type zinc-finger motif lies at 356 to 394 (CAICQAEFTKPIALICQHVFCEECISSWFNKEKTCPLCR).

It localises to the endoplasmic reticulum membrane. It catalyses the reaction S-ubiquitinyl-[E2 ubiquitin-conjugating enzyme]-L-cysteine + [acceptor protein]-L-lysine = [E2 ubiquitin-conjugating enzyme]-L-cysteine + N(6)-ubiquitinyl-[acceptor protein]-L-lysine.. It functions in the pathway protein modification; protein ubiquitination. E3 ubiquitin-protein ligase that acts in the endoplasmic reticulum (ER)-associated degradation (ERAD) pathway, which targets misfolded proteins that accumulate in the endoplasmic reticulum (ER) for ubiquitination and subsequent proteasome-mediated degradation. Protects cells from ER stress-induced apoptosis. This Xenopus laevis (African clawed frog) protein is E3 ubiquitin-protein ligase RNFT1 (rnft1).